A 192-amino-acid chain; its full sequence is uncharacterized protein (192 aa).

The tract at residues 17 to 73 is disordered; the sequence is MLRGSGKKPIQRLAKAPAATASSKTSEWRATTAYGFLPAGGDVRPHSPRYESQGVLS. The span at 30–41 shows a compositional bias: low complexity; it reads AKAPAATASSKT.

This is an uncharacterized protein from Sinorhizobium fredii (strain NBRC 101917 / NGR234).